A 380-amino-acid chain; its full sequence is MSTTVGQVIRCKAAVAWEAGKPLVMEEVDVAPPQKMEVRLKILYTSLCHTDVYFWEAKGQNPVFPRILGHEAAGIVESVGEGVTELGPGDHVLPVFTGECKDCAHCKSEESNMCSLLRINTDRGVMINDGQSRFSINGKPIYHFVGTSTFSEYTVVHVGCVAKINPLAPLDKVCVLSCGISTGLGATLNVAKPTKGSSVAIFGLGAVGLAAAEGARIAGASRIIGVDLNASRFEQAKKFGVTEFVNPKDYSKPVQEVIAEMTDGGVDRSVECTGHIDAMISAFECVHDGWGVAVLVGVPHKEAVFKTHPMNLLNERTLKGTFFGNYKPRSDIPSVVEKYMNKELELEKFITHTLPFAEINKAFDLMLKGEGLRCIITMED.

Cys48, Thr50, His70, Cys100, Cys103, Cys106, Cys114, and Cys178 together coordinate Zn(2+). An alcohol contacts are provided by Thr50 and His70. Residue Thr50 coordinates NAD(+). Residues 203–208, Asp227, Arg232, Thr273, Val296, 296–298, Phe323, and Arg373 each bind NAD(+); these read GLGAVG and VGV.

Belongs to the zinc-containing alcohol dehydrogenase family. As to quaternary structure, homodimer. Homotetramer. Zn(2+) is required as a cofactor.

It is found in the cytoplasm. It catalyses the reaction a primary alcohol + NAD(+) = an aldehyde + NADH + H(+). The enzyme catalyses a secondary alcohol + NAD(+) = a ketone + NADH + H(+). The polypeptide is Alcohol dehydrogenase 1 (ADH1) (Solanum tuberosum (Potato)).